Here is a 421-residue protein sequence, read N- to C-terminus: Gamma-glutamyl phosphate reductase (421 aa).

Belongs to the gamma-glutamyl phosphate reductase family.

The protein localises to the cytoplasm. The enzyme catalyses L-glutamate 5-semialdehyde + phosphate + NADP(+) = L-glutamyl 5-phosphate + NADPH + H(+). The protein operates within amino-acid biosynthesis; L-proline biosynthesis; L-glutamate 5-semialdehyde from L-glutamate: step 2/2. Its function is as follows. Catalyzes the NADPH-dependent reduction of L-glutamate 5-phosphate into L-glutamate 5-semialdehyde and phosphate. The product spontaneously undergoes cyclization to form 1-pyrroline-5-carboxylate. The protein is Gamma-glutamyl phosphate reductase of Ruegeria sp. (strain TM1040) (Silicibacter sp.).